Here is a 569-residue protein sequence, read N- to C-terminus: Protein Noxp20 (569 aa).

3 disordered regions span residues 1–87, 102–126, and 165–208; these read MSDD…GEVT, GDTG…QAGR, and ANSA…GSRG. A Phosphothreonine modification is found at Thr-197. At Ser-262 the chain carries Phosphoserine. Positions 404–439 are disordered; it reads VSIDVAKGSEEEEKEEGKEEKAEEPEEDKTGGQGAK.

This sequence belongs to the FAM114 family. In terms of tissue distribution, over-expressed in brain. Also detected in lung, stomach, and in a lower extent in testis and thymus.

It localises to the cytoplasm. Functionally, may play a role in neuronal cell development. The chain is Protein Noxp20 (Fam114a1) from Mus musculus (Mouse).